Consider the following 161-residue polypeptide: Regulator of ribonuclease activity A (161 aa).

The protein belongs to the RraA family. In terms of assembly, homotrimer. Binds to both RNA-binding sites in the C-terminal region of Rne and to RhlB.

The protein resides in the cytoplasm. Its function is as follows. Globally modulates RNA abundance by binding to RNase E (Rne) and regulating its endonucleolytic activity. Can modulate Rne action in a substrate-dependent manner by altering the composition of the degradosome. Modulates RNA-binding and helicase activities of the degradosome. The protein is Regulator of ribonuclease activity A of Pseudoalteromonas atlantica (strain T6c / ATCC BAA-1087).